The sequence spans 340 residues: Phosphate acyltransferase (340 aa).

It belongs to the PlsX family. As to quaternary structure, homodimer. Probably interacts with PlsY.

The protein resides in the cytoplasm. It carries out the reaction a fatty acyl-[ACP] + phosphate = an acyl phosphate + holo-[ACP]. It participates in lipid metabolism; phospholipid metabolism. In terms of biological role, catalyzes the reversible formation of acyl-phosphate (acyl-PO(4)) from acyl-[acyl-carrier-protein] (acyl-ACP). This enzyme utilizes acyl-ACP as fatty acyl donor, but not acyl-CoA. The polypeptide is Phosphate acyltransferase (Nitrosococcus oceani (strain ATCC 19707 / BCRC 17464 / JCM 30415 / NCIMB 11848 / C-107)).